A 41-amino-acid polypeptide reads, in one-letter code: GTPCKCHGYIGVYWFMLAGCPDGYGYNLSCPYFLGICCVKK.

3 disulfides stabilise this stretch: Cys-4–Cys-37, Cys-6–Cys-30, and Cys-20–Cys-38.

Belongs to the sea anemone type 3 (BDS) potassium channel toxin family.

It is found in the secreted. The protein resides in the nematocyst. In terms of biological role, weakly and reversibly inhibits rat homomeric ASIC1 (isoform ASIC1a) (IC(50)=4.95 uM), and ASIC3 (IC(50)=17 uM). ASIC1a current inhibition and ASIC3 transient current inhibition are not complete, and reach a maximum of 70% inhibition and 80%, respectively. The protein is Pi-stichotoxin-Hcr5c of Radianthus crispa (Leathery sea anemone).